Reading from the N-terminus, the 797-residue chain is G-type lectin S-receptor-like serine/threonine-protein kinase SD2-2 (797 aa).

The signal sequence occupies residues 1–23 (MPCTTYLPLLLLLFLLPPPSVQS). The Bulb-type lectin domain occupies 24–139 (KVIIKGNQTI…DGSPVWQSFD (116 aa)). The Extracellular segment spans residues 24–401 (KVIIKGNQTI…KNSKGNISKS (378 aa)). 4 N-linked (GlcNAc...) asparagine glycosylation sites follow: N30, N49, N150, and N197. The EGF-like; atypical domain maps to 274-310 (PEDPCRVYNLCGQLGFCSSELLKPCACIRGFRPRNDA). 4 cysteine pairs are disulfide-bonded: C278–C290, C284–C298, C359–C381, and C363–C369. In terms of domain architecture, PAN spans 321–407 (CRRENGDSGE…ISKSIIILCS (87 aa)). 2 N-linked (GlcNAc...) asparagine glycosylation sites follow: N366 and N397. The chain crosses the membrane as a helical span at residues 402-422 (IIILCSVVGSISVLGFTLLVP). Residues 423-797 (LILLKRSRKR…SRSSFGRPSP (375 aa)) are Cytoplasmic-facing. In terms of domain architecture, Protein kinase spans 461-742 (NGFSDKVGHG…TVVKMLEGVV (282 aa)). ATP contacts are provided by residues 467-475 (VGHGGFGAV) and K490. A caM-binding region spans residues 550–566 (SPKLLSWETRFRIALGT). The Proton acceptor role is filled by D585. The disordered stretch occupies residues 767–797 (GTSCSEGHGCSDLNTGLSSPGSRSSFGRPSP). Positions 784–797 (SSPGSRSSFGRPSP) are enriched in low complexity.

This sequence belongs to the protein kinase superfamily. Ser/Thr protein kinase family. Autophosphorylated. As to expression, expressed in the shoot apex and roots, specifically in lateral roots and at the root-hypocotyl transition zone.

Its subcellular location is the cell membrane. The catalysed reaction is L-seryl-[protein] + ATP = O-phospho-L-seryl-[protein] + ADP + H(+). The enzyme catalyses L-threonyl-[protein] + ATP = O-phospho-L-threonyl-[protein] + ADP + H(+). Serine/threonine-protein kinase. In Arabidopsis thaliana (Mouse-ear cress), this protein is G-type lectin S-receptor-like serine/threonine-protein kinase SD2-2 (SD22).